The primary structure comprises 764 residues: FAST kinase domain-containing protein 5, mitochondrial (764 aa).

The N-terminal 27 residues, 1–27 (MAATLKSLKLLRYQAFCSPSAFGAVRS), are a transit peptide targeting the mitochondrion. The segment at 68 to 94 (IPTTSSARPGLEFSKTSSSKASTLQLG) is disordered. Over residues 81–93 (SKTSSSKASTLQL) the composition is skewed to polar residues. At Ser95 the chain carries Phosphoserine. At Lys507 the chain carries N6-acetyllysine. The RAP domain occupies 697–757 (LAIQFTNRNQ…RLEKLAFLHE (61 aa)).

The protein belongs to the FAST kinase family. In terms of assembly, found in a complex with GRSF1, DDX28, DHX30 and FASTKD2. Associates with the 12S mitochondrial rRNA (12S mt-rRNA).

Its subcellular location is the mitochondrion matrix. It is found in the mitochondrion nucleoid. Functionally, plays an important role in the processing of non-canonical mitochondrial mRNA precursors. The protein is FAST kinase domain-containing protein 5, mitochondrial (FASTKD5) of Pongo abelii (Sumatran orangutan).